Reading from the N-terminus, the 693-residue chain is UvrABC system protein C (693 aa).

Positions 16 to 95 (DAPGVYRFRD…IKEFDPRFNV (80 aa)) constitute a GIY-YIG domain. The region spanning 208-243 (GVFLRRLESEMAAASAELDFERAARVRDDINALRRV) is the UVR domain. Residues 656–693 (APSPDDATTEPGAVGEPGTADGAAADPDGRDAVVVPEG) are disordered. The span at 672-693 (PGTADGAAADPDGRDAVVVPEG) shows a compositional bias: low complexity.

The protein belongs to the UvrC family. In terms of assembly, interacts with UvrB in an incision complex.

It is found in the cytoplasm. Functionally, the UvrABC repair system catalyzes the recognition and processing of DNA lesions. UvrC both incises the 5' and 3' sides of the lesion. The N-terminal half is responsible for the 3' incision and the C-terminal half is responsible for the 5' incision. The polypeptide is UvrABC system protein C (Beutenbergia cavernae (strain ATCC BAA-8 / DSM 12333 / CCUG 43141 / JCM 11478 / NBRC 16432 / NCIMB 13614 / HKI 0122)).